We begin with the raw amino-acid sequence, 1105 residues long: Ran-binding protein 6 (1105 aa).

The residue at position 2 (alanine 2) is an N-acetylalanine. HEAT repeat units lie at residues 219-257 (FKDF…TVPK), 361-399 (KVVL…GCHQ), 402-440 (EPIL…DFAP), 444-483 (KKFH…DCPK), 866-905 (LPWF…HCSP), 908-946 (FKYV…FGGD), and 949-987 (RSLC…IGKI).

This sequence belongs to the importin beta family.

The protein resides in the cytoplasm. It localises to the nucleus. May function in nuclear protein import as nuclear transport receptor. This Mus musculus (Mouse) protein is Ran-binding protein 6 (Ranbp6).